We begin with the raw amino-acid sequence, 842 residues long: Elongation factor 2 (842 aa).

The 237-residue stretch at 17–253 folds into the tr-type G domain; the sequence is TNVRNMSVIA…LWGDSYFNPK (237 aa). GTP-binding positions include 26 to 33, 158 to 161, and 213 to 215; these read AHVDHGKS, NKVD, and SGL. Position 699 is a diphthamide (H699).

This sequence belongs to the TRAFAC class translation factor GTPase superfamily. Classic translation factor GTPase family. EF-G/EF-2 subfamily.

The protein localises to the cytoplasm. It catalyses the reaction GTP + H2O = GDP + phosphate + H(+). Functionally, catalyzes the GTP-dependent ribosomal translocation step during translation elongation. During this step, the ribosome changes from the pre-translocational (PRE) to the post-translocational (POST) state as the newly formed A-site-bound peptidyl-tRNA and P-site-bound deacylated tRNA move to the P and E sites, respectively. Catalyzes the coordinated movement of the two tRNA molecules, the mRNA and conformational changes in the ribosome. The sequence is that of Elongation factor 2 (EFT1) from Eremothecium gossypii (strain ATCC 10895 / CBS 109.51 / FGSC 9923 / NRRL Y-1056) (Yeast).